A 62-amino-acid polypeptide reads, in one-letter code: Large ribosomal subunit protein bL28 (62 aa).

This sequence belongs to the bacterial ribosomal protein bL28 family.

This Thermoanaerobacter pseudethanolicus (strain ATCC 33223 / 39E) (Clostridium thermohydrosulfuricum) protein is Large ribosomal subunit protein bL28.